A 283-amino-acid polypeptide reads, in one-letter code: ATP phosphoribosyltransferase (283 aa).

This sequence belongs to the ATP phosphoribosyltransferase family. Long subfamily. It depends on Mg(2+) as a cofactor.

Its subcellular location is the cytoplasm. It carries out the reaction 1-(5-phospho-beta-D-ribosyl)-ATP + diphosphate = 5-phospho-alpha-D-ribose 1-diphosphate + ATP. The protein operates within amino-acid biosynthesis; L-histidine biosynthesis; L-histidine from 5-phospho-alpha-D-ribose 1-diphosphate: step 1/9. Its activity is regulated as follows. Feedback inhibited by histidine. Functionally, catalyzes the condensation of ATP and 5-phosphoribose 1-diphosphate to form N'-(5'-phosphoribosyl)-ATP (PR-ATP). Has a crucial role in the pathway because the rate of histidine biosynthesis seems to be controlled primarily by regulation of HisG enzymatic activity. This chain is ATP phosphoribosyltransferase, found in Parabacteroides distasonis (strain ATCC 8503 / DSM 20701 / CIP 104284 / JCM 5825 / NCTC 11152).